The sequence spans 303 residues: Coenzyme PQQ synthesis protein B (303 aa).

It belongs to the PqqB family.

It functions in the pathway cofactor biosynthesis; pyrroloquinoline quinone biosynthesis. In terms of biological role, may be involved in the transport of PQQ or its precursor to the periplasm. The sequence is that of Coenzyme PQQ synthesis protein B from Pseudomonas savastanoi pv. phaseolicola (strain 1448A / Race 6) (Pseudomonas syringae pv. phaseolicola (strain 1448A / Race 6)).